Consider the following 101-residue polypeptide: Small ribosomal subunit protein uS14 (101 aa).

This sequence belongs to the universal ribosomal protein uS14 family. In terms of assembly, part of the 30S ribosomal subunit. Contacts proteins S3 and S10.

In terms of biological role, binds 16S rRNA, required for the assembly of 30S particles and may also be responsible for determining the conformation of the 16S rRNA at the A site. The polypeptide is Small ribosomal subunit protein uS14 (Burkholderia multivorans (strain ATCC 17616 / 249)).